The chain runs to 274 residues: Orotidine 5'-phosphate decarboxylase (274 aa).

Substrate is bound by residues D40, 62-64, 93-102, Y227, and R245; these read KTH and DRKFIDIGNT. K95 acts as the Proton donor in catalysis.

It belongs to the OMP decarboxylase family.

It carries out the reaction orotidine 5'-phosphate + H(+) = UMP + CO2. It participates in pyrimidine metabolism; UMP biosynthesis via de novo pathway; UMP from orotate: step 2/2. The sequence is that of Orotidine 5'-phosphate decarboxylase (pyrG) from Emericella nidulans (strain FGSC A4 / ATCC 38163 / CBS 112.46 / NRRL 194 / M139) (Aspergillus nidulans).